The primary structure comprises 620 residues: Lamin-B2 (620 aa).

The tract at residues 1–38 (MSPPSPGRRREQRRPRAAATMATPLPGRAGGPATPLSP) is disordered. A head region spans residues 1-48 (MSPPSPGRRREQRRPRAAATMATPLPGRAGGPATPLSPTRLSRLQEKE). Phosphothreonine is present on residues threonine 23 and threonine 34. Serine 37 bears the Phosphoserine mark. The IF rod domain occupies 46–402 (EKEELRELND…KLLEGEEERL (357 aa)). Positions 49–83 (ELRELNDRLAHYIDRVRALELENDRLLLKISEKEE) are coil 1A. Lysine 77 is covalently cross-linked (Glycyl lysine isopeptide (Lys-Gly) (interchain with G-Cter in SUMO2)). An N6-acetyllysine; alternate modification is found at lysine 81. Lysine 81 participates in a covalent cross-link: Glycyl lysine isopeptide (Lys-Gly) (interchain with G-Cter in SUMO2); alternate. The linker 1 stretch occupies residues 84–95 (VTTREVSGIKAL). The tract at residues 96–229 (YESELADARR…DFRKSVFEEE (134 aa)) is coil 1B. Glycyl lysine isopeptide (Lys-Gly) (interchain with G-Cter in SUMO2) cross-links involve residues lysine 195 and lysine 255. The tract at residues 230 to 256 (VRETRRRHERRLVEVDSSRQQEYDFKM) is linker 2. The tract at residues 257 to 400 (AQALEELRSQ…YRKLLEGEEE (144 aa)) is coil 2. Residues serine 316 and serine 407 each carry the phosphoserine modification. The disordered stretch occupies residues 399-464 (EERLKLSPSP…GTGGSGGFHL (66 aa)). Residues 401–620 (RLKLSPSPSS…RTTSRGCYVM (220 aa)) are tail. Low complexity predominate over residues 404–431 (LSPSPSSRVTVSRATSSSSGSLSATGRL). The O-linked (GlcNAc) threonine glycan is linked to threonine 413. 4 positions are modified to phosphoserine: serine 420, serine 422, serine 424, and serine 426. Arginine 433 carries the omega-N-methylarginine modification. The Nuclear localization signal motif lies at 435-440 (KRKRLE). Residues 444 to 453 (PLGSGPSVLG) are compositionally biased toward low complexity. One can recognise an LTD domain in the interval 462 to 579 (FHLAQQASAS…EEVAMRTVKK (118 aa)). Lysine 489 participates in a covalent cross-link: Glycyl lysine isopeptide (Lys-Gly) (interchain with G-Cter in SUMO2). At serine 497 the chain carries Phosphoserine. The disordered stretch occupies residues 581–620 (SVMRENENGEEEEEEAEFGEEDLFHQQGDPRTTSRGCYVM). Over residues 588–601 (NGEEEEEEAEFGEE) the composition is skewed to acidic residues. Residues 609–620 (DPRTTSRGCYVM) show a composition bias toward polar residues. The residue at position 617 (cysteine 617) is a Cysteine methyl ester. Residue cysteine 617 is the site of S-farnesyl cysteine attachment. The propeptide at 618 to 620 (YVM) is removed in mature form.

The protein belongs to the intermediate filament family. In terms of assembly, dimer. Lamin dimers then assemble into dimeric head-to-tail polymers. Ultimately, two head-to-tail polymers assemble laterally into a protofilament with a uniformly shaped rod of 3.5 nm in diameter. Interacts with TMEM43. Post-translationally, B-type lamins undergo a series of modifications, such as farnesylation and phosphorylation. Increased phosphorylation of the lamins occurs before envelope disintegration and probably plays a role in regulating lamin associations. In terms of processing, phosphorylation plays a key role in lamin organization, subcellular localization and nuclear envelope disintegration. Phosphorylation by CDK1 at Ser-37 and Ser-407 at the onset of mitosis drives lamin disassembly and nuclear envelope breakdown.

The protein resides in the nucleus lamina. Its function is as follows. Lamins are intermediate filament proteins that assemble into a filamentous meshwork, and which constitute the major components of the nuclear lamina, a fibrous layer on the nucleoplasmic side of the inner nuclear membrane. Lamins provide a framework for the nuclear envelope, bridging the nuclear envelope and chromatin, thereby playing an important role in nuclear assembly, chromatin organization, nuclear membrane and telomere dynamics. The structural integrity of the lamina is strictly controlled by the cell cycle, as seen by the disintegration and formation of the nuclear envelope in prophase and telophase, respectively. The polypeptide is Lamin-B2 (LMNB2) (Homo sapiens (Human)).